The chain runs to 621 residues: Glutamine--fructose-6-phosphate aminotransferase [isomerizing] (621 aa).

The Nucleophile; for GATase activity role is filled by cysteine 2. The 222-residue stretch at 2 to 223 (CGIIGYVGEG…DRELGIISIS (222 aa)) folds into the Glutamine amidotransferase type-2 domain. SIS domains are found at residues 289 to 436 (LHLE…HKFT) and 470 to 611 (LSKQ…IDKP). The For Fru-6P isomerization activity role is filled by lysine 616.

In terms of assembly, homodimer.

It is found in the plastid. The protein localises to the chloroplast. It carries out the reaction D-fructose 6-phosphate + L-glutamine = D-glucosamine 6-phosphate + L-glutamate. Catalyzes the first step in hexosamine metabolism, converting fructose-6P into glucosamine-6P using glutamine as a nitrogen source. In Cyanidium caldarium (Red alga), this protein is Glutamine--fructose-6-phosphate aminotransferase [isomerizing].